Reading from the N-terminus, the 61-residue chain is UPF0434 protein MS0934 (61 aa).

The protein belongs to the UPF0434 family.

The protein is UPF0434 protein MS0934 of Mannheimia succiniciproducens (strain KCTC 0769BP / MBEL55E).